We begin with the raw amino-acid sequence, 1179 residues long: DNA-directed RNA polymerase subunit beta (1179 aa).

Belongs to the RNA polymerase beta chain family. The RNAP catalytic core consists of 2 alpha, 1 beta, 1 beta' and 1 omega subunit. When a sigma factor is associated with the core the holoenzyme is formed, which can initiate transcription.

The catalysed reaction is RNA(n) + a ribonucleoside 5'-triphosphate = RNA(n+1) + diphosphate. In terms of biological role, DNA-dependent RNA polymerase catalyzes the transcription of DNA into RNA using the four ribonucleoside triphosphates as substrates. In Oceanobacillus iheyensis (strain DSM 14371 / CIP 107618 / JCM 11309 / KCTC 3954 / HTE831), this protein is DNA-directed RNA polymerase subunit beta.